Here is a 268-residue protein sequence, read N- to C-terminus: Eukaryotic translation initiation factor 3 subunit J (268 aa).

Disordered stretches follow at residues 1–117 (MTPS…DLKH) and 219–242 (NEKMREERAADKGSKKSKAAKTKV). A compositionally biased stretch (acidic residues) spans 26–44 (DEEDEEVLDSWDAAEDSEV). The stretch at 40-95 (EDSEVEREKAAKAAEAKAKAEAEAAAKKKSKAQRIEEHKAERRKNAEADSEEDEDE) forms a coiled coil. Composition is skewed to basic and acidic residues over residues 45 to 65 (EREKAAKAAEAKAKAEAEAAA) and 72 to 86 (QRIEEHKAERRKNAE). The segment covering 87–99 (ADSEEDEDEDEDE) has biased composition (acidic residues). 2 stretches are compositionally biased toward basic and acidic residues: residues 100 to 117 (AEKRARLRRTEKDSDLKH) and 220 to 232 (EKMREERAADKGS).

Belongs to the eIF-3 subunit J family. As to quaternary structure, component of the eukaryotic translation initiation factor 3 (eIF-3) complex.

It localises to the cytoplasm. Component of the eukaryotic translation initiation factor 3 (eIF-3) complex, which is involved in protein synthesis of a specialized repertoire of mRNAs and, together with other initiation factors, stimulates binding of mRNA and methionyl-tRNAi to the 40S ribosome. The eIF-3 complex specifically targets and initiates translation of a subset of mRNAs involved in cell proliferation. In Aspergillus clavatus (strain ATCC 1007 / CBS 513.65 / DSM 816 / NCTC 3887 / NRRL 1 / QM 1276 / 107), this protein is Eukaryotic translation initiation factor 3 subunit J (hcr1).